A 465-amino-acid chain; its full sequence is UDP-N-acetylmuramate--L-alanine ligase (465 aa).

Residue 115–121 coordinates ATP; it reads GAHGKTT.

It belongs to the MurCDEF family.

The protein localises to the cytoplasm. It carries out the reaction UDP-N-acetyl-alpha-D-muramate + L-alanine + ATP = UDP-N-acetyl-alpha-D-muramoyl-L-alanine + ADP + phosphate + H(+). Its pathway is cell wall biogenesis; peptidoglycan biosynthesis. In terms of biological role, cell wall formation. The sequence is that of UDP-N-acetylmuramate--L-alanine ligase from Coxiella burnetii (strain CbuG_Q212) (Coxiella burnetii (strain Q212)).